Reading from the N-terminus, the 856-residue chain is Nuclear valosin-containing protein-like (856 aa).

An interaction with RPL5 region spans residues 1 to 220; the sequence is MKPRPAGFVD…SLLESDMKRK (220 aa). The Nucleolar localization signal motif lies at 49-52; it reads RRKR. Lys70 bears the N6-acetyllysine mark. A disordered region spans residues 84–175; sequence AKRARQGEED…AKDSEGGWFI (92 aa). Residues 85–88 carry the Nuclear localization signal motif; the sequence is KRAR. A compositionally biased stretch (acidic residues) spans 92-111; the sequence is EDNEYTESYSDDDSSMEDYP. 2 stretches are compositionally biased toward polar residues: residues 114 to 124 and 133 to 158; these read QSANHMNSSLL and DSVS…SKTG. Position 134 is a phosphoserine (Ser134). Thr138 carries the phosphothreonine modification. N6-acetyllysine is present on Lys156. Residue Ser191 is modified to Phosphoserine. Residues 197-236 are disordered; it reads PKKPITEIQDSKDSSLLESDMKRKGKLKNKGSKRKKEDLQ. Residues 205–218 show a composition bias toward basic and acidic residues; the sequence is QDSKDSSLLESDMK. Lys208 is covalently cross-linked (Glycyl lysine isopeptide (Lys-Gly) (interchain with G-Cter in SUMO2)). Phosphoserine is present on residues Ser211 and Ser215. Residues 218–232 carry the Nuclear localization signal motif; it reads KRKGKLKNKGSKRKK. Residues 219 to 230 are compositionally biased toward basic residues; sequence RKGKLKNKGSKR. Positions 267 to 474 are interaction with WDR74; that stretch reads VGGNDMTLKE…LTPGFVGADL (208 aa). ATP is bound at residue 305-312; the sequence is GPPGCGKT. Positions 496–523 are disordered; the sequence is QQKKNPEMEDLPSKGVQEERLGTEPTSE. Residue 622–629 coordinates ATP; sequence GPPGCGKT.

Belongs to the AAA ATPase family. Interacts with NCL/nucleolin. Isoform 1 and isoform 2 interact with TERT and isoform 1 exhibits a higher binding affinity for TERT compared to isoform 2. Isoform 1 interacts with MTREX in an ATP-dependent manner; the interaction is required to associate NVL with nuclear RNA exosome. Isoform 1 interacts with RPL5 in an ATP-dependent manner. Interacts with WDR74 (through WDR repeats); the interaction is independent of RNA or pre-60S ribosome particles. As to expression, widely expressed. Highest level of expression in heart, placenta, skeletal muscle, pancreas and retina.

The protein localises to the nucleus. The protein resides in the nucleoplasm. It localises to the nucleolus. Its function is as follows. Participates in the assembly of the telomerase holoenzyme and effecting of telomerase activity via its interaction with TERT. Involved in both early and late stages of the pre-rRNA processing pathways. Spatiotemporally regulates 60S ribosomal subunit biogenesis in the nucleolus. Catalyzes the release of specific assembly factors, such as WDR74, from pre-60S ribosomal particles through the ATPase activity. This chain is Nuclear valosin-containing protein-like, found in Homo sapiens (Human).